We begin with the raw amino-acid sequence, 691 residues long: ATP-dependent zinc metalloprotease FtsH 2 (691 aa).

The tract at residues 1 to 48 (MTDEPQSDEQQTTEQERPLGTKRATRADGLRRPGVRSGLAERRSPAAD) is disordered. Residues 1–64 (MTDEPQSDEQ…AAVRRFLLRD (64 aa)) lie on the Cytoplasmic side of the membrane. Over residues 14 to 31 (EQERPLGTKRATRADGLR) the composition is skewed to basic and acidic residues. A helical membrane pass occupies residues 65-85 (VFALGLMIAALVIVILFFTLL). Residues 86 to 168 (GATKPTSSGT…AVKQQPGKAQ (83 aa)) lie on the Extracellular side of the membrane. The helical transmembrane segment at 169–189 (VTIVVQFLLPILLLVCLFALF) threads the bilayer. The Cytoplasmic portion of the chain corresponds to 190 to 691 (MRIGQDGGAG…ERGSARDRDA (502 aa)). 265–272 (GPPGTGKT) contacts ATP. His486 lines the Zn(2+) pocket. Residue Glu487 is part of the active site. His490 and Asp563 together coordinate Zn(2+).

It in the central section; belongs to the AAA ATPase family. This sequence in the C-terminal section; belongs to the peptidase M41 family. Homohexamer. The cofactor is Zn(2+).

The protein resides in the cell membrane. Acts as a processive, ATP-dependent zinc metallopeptidase for both cytoplasmic and membrane proteins. Plays a role in the quality control of integral membrane proteins. The protein is ATP-dependent zinc metalloprotease FtsH 2 of Conexibacter woesei (strain DSM 14684 / CCUG 47730 / CIP 108061 / JCM 11494 / NBRC 100937 / ID131577).